Reading from the N-terminus, the 101-residue chain is MAKLALIEREKKRAKLVAKYADKRANLKAIIDDQEKSEEERYLARLELQKLPRNANPTRQRNRCAITGRPRGTFRKFGLARNKIREIAFKGEIPGLTKASW.

It belongs to the universal ribosomal protein uS14 family. As to quaternary structure, part of the 30S ribosomal subunit. Contacts proteins S3 and S10.

Functionally, binds 16S rRNA, required for the assembly of 30S particles and may also be responsible for determining the conformation of the 16S rRNA at the A site. This chain is Small ribosomal subunit protein uS14, found in Cupriavidus metallidurans (strain ATCC 43123 / DSM 2839 / NBRC 102507 / CH34) (Ralstonia metallidurans).